Consider the following 574-residue polypeptide: ATP-grasp enzyme fsqD (574 aa).

An ATP-grasp domain is found at 234 to 462 (NKFLTSKYVG…YWGLAAVLGV (229 aa)). An ATP-binding site is contributed by 263–318 (ALPYPLIVKPCDGWSSEGVSRVESPDAFPAAVKSIDTSRHGTEFVMEPYCDGPEVD). Mg(2+)-binding residues include E394, E431, and N433. 3 residues coordinate Mn(2+): E394, E431, and N433.

It depends on Mg(2+) as a cofactor. Mn(2+) serves as cofactor.

It functions in the pathway secondary metabolite biosynthesis. ATP-grasp enzyme; part of the gene cluster that mediates the biosynthesis of the isoquinoline alkaloids fumisoquin A, fumisoquin B and fumisoquin C; as well as small amounts of fumipyrrole as a shunt metabolite. The products of the cluster lead to a brown coloration and are important for growth and conidiation. The nonribosomal peptide synthetase-like protein fsqF, which lacks a canonical condensation domain, is required for addition of a serine-derived dehydroalanine moiety to activated tyrosine but is not essential for the subsequent steps leading to isoquinoline formation. A different enzyme, most likely the ATP-grasp enzyme fsqD, is responsible for activation of tyrosine. Three additional enzymes encoded by the fsq cluster, the N-methyltransferase fsqC, the phenol 2-monooxygenase fsqG and the FAD-dependent oxidase fsqB, catalyze the formation of the isoquinoline ring system in the fumisoquins. FsqB converts the fspF thiolation domain-bound (2S,4S,5S)-2-amino-6-(3,4-dihydroxyphenyl)-4-hydroxy-5-(methylamino)hexanoyl into isoquinoline. The cyclization most likely proceeds via a two-step mechanism, beginning with FAD-dependent oxidation of the methyl group to an iminium species followed by electrophilic attack on the deprotonated phenol. This Aspergillus fumigatus (strain ATCC MYA-4609 / CBS 101355 / FGSC A1100 / Af293) (Neosartorya fumigata) protein is ATP-grasp enzyme fsqD.